The chain runs to 442 residues: Testican-1 (442 aa).

Positions 1–21 (MPAIAVLAAAAAAWCFLQVDS) are cleaved as a signal peptide. Disulfide bonds link C89–C100, C94–C110, C139–C169, C142–C162, C151–C183, C316–C340, C351–C358, and C360–C379. Positions 133–185 (PSNLVKCKPCPVAQSAMVCGSDGHTYTSKCKLEFHACSTGKSLNSLCDGPCPC) constitute a Kazal-like domain. One can recognise a Thyroglobulin type-1 domain in the interval 313 to 379 (GLPCQNEMNR…GSRKQGTVSC (67 aa)). Disordered regions lie at residues 375 to 395 (GTVS…GGSV) and 420 to 442 (TRAV…GYIW). 2 O-linked (Xyl...) (glycosaminoglycan) serine glycosylation sites follow: S386 and S391. The segment covering 425 to 442 (EDDEDEDDDKEDEVGYIW) has biased composition (acidic residues).

Post-translationally, contains chondroitin sulfate and heparan sulfate O-linked oligosaccharides. As to expression, predominantly expressed in the postsynaptic area of pyramidal neurons.

The protein localises to the secreted. It is found in the extracellular space. Its subcellular location is the extracellular matrix. May play a role in cell-cell and cell-matrix interactions. May contribute to various neuronal mechanisms in the central nervous system. This Mus musculus (Mouse) protein is Testican-1 (Spock1).